The sequence spans 273 residues: Diaminopimelate epimerase (273 aa).

Residues asparagine 11 and asparagine 60 each contribute to the substrate site. The active-site Proton donor is the cysteine 69. Substrate contacts are provided by residues 70–71 (GN), asparagine 181, and 199–200 (ER). Catalysis depends on cysteine 209, which acts as the Proton acceptor. Substrate is bound at residue 210-211 (GT).

The protein belongs to the diaminopimelate epimerase family. In terms of assembly, homodimer.

It is found in the cytoplasm. The catalysed reaction is (2S,6S)-2,6-diaminopimelate = meso-2,6-diaminopimelate. It functions in the pathway amino-acid biosynthesis; L-lysine biosynthesis via DAP pathway; DL-2,6-diaminopimelate from LL-2,6-diaminopimelate: step 1/1. Functionally, catalyzes the stereoinversion of LL-2,6-diaminopimelate (L,L-DAP) to meso-diaminopimelate (meso-DAP), a precursor of L-lysine and an essential component of the bacterial peptidoglycan. This is Diaminopimelate epimerase from Helicobacter pylori (strain HPAG1).